We begin with the raw amino-acid sequence, 361 residues long: Putative agmatine deiminase (361 aa).

C354 functions as the Amidino-cysteine intermediate in the catalytic mechanism.

It belongs to the agmatine deiminase family.

The catalysed reaction is agmatine + H2O = N-carbamoylputrescine + NH4(+). The chain is Putative agmatine deiminase from Streptococcus pneumoniae (strain ATCC 700669 / Spain 23F-1).